The chain runs to 198 residues: NADH-quinone oxidoreductase subunit B 1 (198 aa).

[4Fe-4S] cluster-binding residues include C77, C78, C142, and C172.

Belongs to the complex I 20 kDa subunit family. NDH-1 is composed of 14 different subunits. Subunits NuoB, C, D, E, F, and G constitute the peripheral sector of the complex. [4Fe-4S] cluster serves as cofactor.

The protein resides in the cell inner membrane. It catalyses the reaction a quinone + NADH + 5 H(+)(in) = a quinol + NAD(+) + 4 H(+)(out). Functionally, NDH-1 shuttles electrons from NADH, via FMN and iron-sulfur (Fe-S) centers, to quinones in the respiratory chain. The immediate electron acceptor for the enzyme in this species is believed to be ubiquinone. Couples the redox reaction to proton translocation (for every two electrons transferred, four hydrogen ions are translocated across the cytoplasmic membrane), and thus conserves the redox energy in a proton gradient. This Rhodopseudomonas palustris (strain ATCC BAA-98 / CGA009) protein is NADH-quinone oxidoreductase subunit B 1.